Reading from the N-terminus, the 361-residue chain is Large ribosomal subunit protein mL45 (361 aa).

The protein belongs to the mitochondrion-specific ribosomal protein mL45 family.

It localises to the mitochondrion. The polypeptide is Large ribosomal subunit protein mL45 (mrpl-45) (Caenorhabditis briggsae).